The chain runs to 306 residues: Apolipoprotein E (306 aa).

Positions 1–18 (MKVLWAVLVVTLLAGCQA) are cleaved as a signal peptide. 8 tandem repeats follow at residues 81 to 102 (VLME…QELG), 103 to 124 (PMAE…ARLG), 125 to 146 (ADME…TMLG), 147 to 168 (QSAE…KRLL), 169 to 190 (RDAE…EGAE), 191 to 212 (RGVS…LRAA), 213 to 230 (QTSQ…ERLR), and 231 to 252 (GRLE…EQME). The 8 X 22 AA approximate tandem repeats stretch occupies residues 81-252 (VLMEDTMKEV…RLDVVREQME (172 aa)). Methionine sulfoxide is present on M144. Phosphoserine is present on S148. Residues 159 to 169 (HLRKLRKRLLR) form an LDL and other lipoprotein receptors binding region. 163 to 166 (LRKR) contributes to the heparin binding site. Positions 211–280 (AAQTSQPLRE…GWFEPVVEDM (70 aa)) are lipid-binding and lipoprotein association. A heparin-binding site is contributed by 226-233 (GERLRGRL). The segment at 268–280 (RLKGWFEPVVEDM) is specificity for association with VLDL.

It belongs to the apolipoprotein A1/A4/E family. Homotetramer. May interact with ABCA1; functionally associated with ABCA1 in the biogenesis of HDLs. May interact with APP/A4 amyloid-beta peptide; the interaction is extremely stable in vitro but its physiological significance is unclear. May interact with MAPT. May interact with MAP2. In the cerebrospinal fluid, interacts with secreted SORL1. Interacts with PMEL; this allows the loading of PMEL luminal fragment on ILVs to induce fibril nucleation. Post-translationally, APOE exists as multiple glycosylated and sialylated glycoforms within cells and in plasma. The extent of glycosylation and sialylation are tissue and context specific. Glycated in plasma VLDL. In terms of processing, phosphorylated by FAM20C in the extracellular medium.

It is found in the secreted. The protein localises to the extracellular space. The protein resides in the extracellular matrix. It localises to the extracellular vesicle. Its subcellular location is the endosome. It is found in the multivesicular body. In terms of biological role, APOE is an apolipoprotein, a protein associating with lipid particles, that mainly functions in lipoprotein-mediated lipid transport between organs via the plasma and interstitial fluids. APOE is a core component of plasma lipoproteins and is involved in their production, conversion and clearance. Apolipoproteins are amphipathic molecules that interact both with lipids of the lipoprotein particle core and the aqueous environment of the plasma. As such, APOE associates with chylomicrons, chylomicron remnants, very low density lipoproteins (VLDL) and intermediate density lipoproteins (IDL) but shows a preferential binding to high-density lipoproteins (HDL). It also binds a wide range of cellular receptors including the LDL receptor/LDLR, the LDL receptor-related proteins LRP1, LRP2 and LRP8 and the very low-density lipoprotein receptor/VLDLR that mediate the cellular uptake of the APOE-containing lipoprotein particles. Finally, APOE also has a heparin-binding activity and binds heparan-sulfate proteoglycans on the surface of cells, a property that supports the capture and the receptor-mediated uptake of APOE-containing lipoproteins by cells. A main function of APOE is to mediate lipoprotein clearance through the uptake of chylomicrons, VLDLs, and HDLs by hepatocytes. APOE is also involved in the biosynthesis by the liver of VLDLs as well as their uptake by peripheral tissues ensuring the delivery of triglycerides and energy storage in muscle, heart and adipose tissues. By participating in the lipoprotein-mediated distribution of lipids among tissues, APOE plays a critical role in plasma and tissues lipid homeostasis. APOE is also involved in two steps of reverse cholesterol transport, the HDLs-mediated transport of cholesterol from peripheral tissues to the liver, and thereby plays an important role in cholesterol homeostasis. First, it is functionally associated with ABCA1 in the biogenesis of HDLs in tissues. Second, it is enriched in circulating HDLs and mediates their uptake by hepatocytes. APOE also plays an important role in lipid transport in the central nervous system, regulating neuron survival and sprouting. This chain is Apolipoprotein E (APOE), found in Hystrix brachyura (Malayan porcupine).